The chain runs to 139 residues: Arsenate reductase (139 aa).

Catalysis depends on nucleophile residues C10, C82, and C89. Intrachain disulfides connect C10-C82 and C82-C89.

This sequence belongs to the low molecular weight phosphotyrosine protein phosphatase family. Thioredoxin-coupled ArsC subfamily.

It is found in the cytoplasm. The catalysed reaction is arsenate + [thioredoxin]-dithiol + H(+) = arsenite + [thioredoxin]-disulfide + H2O. Functionally, catalyzes the reduction of arsenate [As(V)] to arsenite [As(III)]. This is Arsenate reductase from Bacillus licheniformis (strain ATCC 14580 / DSM 13 / JCM 2505 / CCUG 7422 / NBRC 12200 / NCIMB 9375 / NCTC 10341 / NRRL NRS-1264 / Gibson 46).